An 81-amino-acid chain; its full sequence is Mipartoxin-2 (81 aa).

Residues 1–21 (MKTLLLTLVVVTIVCLDLGNS) form the signal peptide. Disulfide bonds link Cys-24–Cys-42, Cys-35–Cys-61, Cys-65–Cys-73, and Cys-74–Cys-79.

The protein belongs to the three-finger toxin family. Short-chain subfamily. Expressed by the venom gland.

It localises to the secreted. Its function is as follows. Snake venom neurotoxin that blocks neuromuscular transmission, presenting a postsynaptic action through the nicotinic acetylcholine receptor (nAChR). Has no cytotoxic activity. In Micrurus mipartitus (Red-tailed coral snake), this protein is Mipartoxin-2.